Consider the following 115-residue polypeptide: MSMDELDPHVARALTLAARFQSALDGTLNQMNNGSFRATDEAETVEVTINGHQWLTGLRIEDGLLKKLGAEAVAQRVNEALHNAQAAASAYNDAAGEQLTAALSAMSRAMNEGMA.

This chain is ESX-1 secretion-associated protein EspL, found in Mycobacterium tuberculosis (strain CDC 1551 / Oshkosh).